The primary structure comprises 514 residues: Steroid 17-alpha-hydroxylase/17,20 lyase (514 aa).

C445 contacts heme.

Belongs to the cytochrome P450 family. The cofactor is heme.

The protein resides in the membrane. It carries out the reaction a C21-steroid + reduced [NADPH--hemoprotein reductase] + O2 = a 17alpha-hydroxy-C21-steroid + oxidized [NADPH--hemoprotein reductase] + H2O + H(+). The catalysed reaction is 17alpha-hydroxyprogesterone + reduced [NADPH--hemoprotein reductase] + O2 = androst-4-ene-3,17-dione + acetate + oxidized [NADPH--hemoprotein reductase] + H2O + 2 H(+). The enzyme catalyses 17alpha-hydroxypregnenolone + reduced [NADPH--hemoprotein reductase] + O2 = 3beta-hydroxyandrost-5-en-17-one + acetate + oxidized [NADPH--hemoprotein reductase] + H2O + 2 H(+). Its pathway is lipid metabolism; steroid biosynthesis. Functionally, conversion of pregnenolone and progesterone to their 17-alpha-hydroxylated products and subsequently to dehydroepiandrosterone (DHEA) and androstenedione. Catalyzes both the 17-alpha-hydroxylation and the 17,20-lyase reaction. In Ictalurus punctatus (Channel catfish), this protein is Steroid 17-alpha-hydroxylase/17,20 lyase (cyp17a1).